The following is a 349-amino-acid chain: Ferredoxin--NADP reductase 3 (349 aa).

FAD contacts are provided by E34, K42, Y46, V86, I120, D287, and S328.

The protein belongs to the ferredoxin--NADP reductase type 2 family. Homodimer. FAD is required as a cofactor.

It catalyses the reaction 2 reduced [2Fe-2S]-[ferredoxin] + NADP(+) + H(+) = 2 oxidized [2Fe-2S]-[ferredoxin] + NADPH. The chain is Ferredoxin--NADP reductase 3 from Lysinibacillus sphaericus (strain C3-41).